We begin with the raw amino-acid sequence, 197 residues long: C4-dicarboxylate transport transcriptional regulatory protein DctR (197 aa).

The Response regulatory domain maps to 4–120; the sequence is TVHIVDDEES…HIVDIALSAI (117 aa). A 4-aspartylphosphate modification is found at Asp-53. The interval 128 to 135 is inter-domain linker; that stretch reads AEAQAREA. One can recognise an HTH luxR-type domain in the interval 136–197; that stretch reads VAARRASLSA…RNIADLARMT (62 aa). A DNA-binding region (H-T-H motif) is located at residues 160 to 179; the sequence is NKQIAERLGIAMRTVEVHRS.

Phosphorylated by DctS.

It is found in the cytoplasm. In terms of biological role, member of the two-component regulatory system DctS/DctR involved in the transport of C4-dicarboxylates. DctR functions as a transcriptional repressor of genes for C4-dicarboxylate transport. In Rhodobacter capsulatus (Rhodopseudomonas capsulata), this protein is C4-dicarboxylate transport transcriptional regulatory protein DctR (dctR).